The following is a 342-amino-acid chain: N-acetyl-gamma-glutamyl-phosphate reductase (342 aa).

C156 is a catalytic residue.

It belongs to the NAGSA dehydrogenase family. Type 1 subfamily.

The protein resides in the cytoplasm. The catalysed reaction is N-acetyl-L-glutamate 5-semialdehyde + phosphate + NADP(+) = N-acetyl-L-glutamyl 5-phosphate + NADPH + H(+). It functions in the pathway amino-acid biosynthesis; L-arginine biosynthesis; N(2)-acetyl-L-ornithine from L-glutamate: step 3/4. Functionally, catalyzes the NADPH-dependent reduction of N-acetyl-5-glutamyl phosphate to yield N-acetyl-L-glutamate 5-semialdehyde. The chain is N-acetyl-gamma-glutamyl-phosphate reductase from Pseudoalteromonas atlantica (strain T6c / ATCC BAA-1087).